A 420-amino-acid polypeptide reads, in one-letter code: UDP-N-acetylglucosamine 1-carboxyvinyltransferase (420 aa).

22–23 contacts phosphoenolpyruvate; the sequence is KN. A UDP-N-acetyl-alpha-D-glucosamine-binding site is contributed by Arg93. The active-site Proton donor is Cys117. Position 117 is a 2-(S-cysteinyl)pyruvic acid O-phosphothioketal (Cys117). UDP-N-acetyl-alpha-D-glucosamine contacts are provided by residues 162 to 165, Asp307, and Ile329; that span reads KVSV.

Belongs to the EPSP synthase family. MurA subfamily.

It localises to the cytoplasm. The enzyme catalyses phosphoenolpyruvate + UDP-N-acetyl-alpha-D-glucosamine = UDP-N-acetyl-3-O-(1-carboxyvinyl)-alpha-D-glucosamine + phosphate. Its pathway is cell wall biogenesis; peptidoglycan biosynthesis. Its function is as follows. Cell wall formation. Adds enolpyruvyl to UDP-N-acetylglucosamine. In Actinobacillus succinogenes (strain ATCC 55618 / DSM 22257 / CCUG 43843 / 130Z), this protein is UDP-N-acetylglucosamine 1-carboxyvinyltransferase.